We begin with the raw amino-acid sequence, 35 residues long: Augerpeptide hheTx5 (35 aa).

Contains 4 disulfide bonds. As to expression, expressed by the venom duct.

It is found in the secreted. The protein is Augerpeptide hheTx5 of Hastula hectica (Sea snail).